The following is a 291-amino-acid chain: Gamma-sarcoglycan (291 aa).

Residues 38 to 58 traverse the membrane as a helical; Signal-anchor for type II membrane protein segment; the sequence is LFVLLLLIVLLVNFALTIWIL. Residues 59–291 lie on the Extracellular side of the membrane; the sequence is RVMWFSPVGM…TCHEHSHLCL (233 aa). Asn-110 carries an N-linked (GlcNAc...) asparagine glycan. Disulfide bonds link Cys-265–Cys-290 and Cys-267–Cys-283.

The protein belongs to the sarcoglycan beta/delta/gamma/zeta family. As to quaternary structure, interacts with the syntrophin SNTA1. Cross-link to form 2 major subcomplexes: one consisting of SGCB, SGCD and SGCG and the other consisting of SGCB and SGCD. The association between SGCB and SGCG is particularly strong while SGCA is loosely associated with the other sarcoglycans. Interacts with FLNC. In terms of processing, disulfide bonds are present.

It localises to the cell membrane. The protein localises to the sarcolemma. It is found in the cytoplasm. The protein resides in the cytoskeleton. Functionally, component of the sarcoglycan complex, a subcomplex of the dystrophin-glycoprotein complex which forms a link between the F-actin cytoskeleton and the extracellular matrix. This is Gamma-sarcoglycan (SGCG) from Bos taurus (Bovine).